The primary structure comprises 199 residues: MAFKLPNLPYAYDALEPYIDQRTMEFHHDKHHNTYVTKLNATVEGTELEHQSLADMIANLDKVPEAMRMSVRNNGGGHFNHSLFWEILSPNSEEKGGVIDDIKAQWGTLDEFKNEFANKATTLFGSGWTWLVVNNGKLEIVTTPNQDNPLTEGKTPILLFDVWEHAYYLKYQNKRPDYMTAFWNIVNWKKVDELYQAAK.

Histidine 27, histidine 81, aspartate 161, and histidine 165 together coordinate Fe(3+). Residues histidine 27, histidine 81, aspartate 161, and histidine 165 each coordinate Mn(2+).

It belongs to the iron/manganese superoxide dismutase family. In terms of assembly, homodimer. Can also form a heterodimer with SodA. Mn(2+) is required as a cofactor. Fe(3+) serves as cofactor.

It catalyses the reaction 2 superoxide + 2 H(+) = H2O2 + O2. Destroys superoxide anion radicals which are normally produced within the cells and which are toxic to biological systems. Catalyzes the dismutation of superoxide anion radicals into O2 and H2O2 by successive reduction and oxidation of the transition metal ion at the active site. This chain is Superoxide dismutase [Mn/Fe] 2 (sodM), found in Staphylococcus aureus (strain bovine RF122 / ET3-1).